The following is a 307-amino-acid chain: tRNA dimethylallyltransferase (307 aa).

An ATP-binding site is contributed by 9 to 16 (GPTAVGKT). Substrate is bound at residue 11–16 (TAVGKT). The interval 34 to 37 (DSMQ) is interaction with substrate tRNA.

Belongs to the IPP transferase family. Monomer. The cofactor is Mg(2+).

It catalyses the reaction adenosine(37) in tRNA + dimethylallyl diphosphate = N(6)-dimethylallyladenosine(37) in tRNA + diphosphate. Catalyzes the transfer of a dimethylallyl group onto the adenine at position 37 in tRNAs that read codons beginning with uridine, leading to the formation of N6-(dimethylallyl)adenosine (i(6)A). This is tRNA dimethylallyltransferase from Limosilactobacillus fermentum (strain NBRC 3956 / LMG 18251) (Lactobacillus fermentum).